The primary structure comprises 111 residues: HTH-type transcriptional regulator SinR (111 aa).

One can recognise an HTH cro/C1-type domain in the interval Ile-6–Leu-61. The segment at residues Leu-17–Arg-36 is a DNA-binding region (H-T-H motif). Residues Lys-65–Lys-103 form the Sin domain.

In terms of assembly, homotetramer in the absence of SinI. Heterodimer with SinI. Interaction with SinI disrupts the SinR tetramer and its repressor activity. Interacts with hpr.

Functionally, negative as well as positive regulator of alternate developmental processes that are induced at the end of vegetative growth in response to nutrient depletion. Binds to the alkaline protease (aprE) gene at two sites. Also acts as a repressor of the key sporulation gene spo0A. Negatively regulates transcription of the eps operon, which is responsible for the biosynthesis of an exopolysaccharide involved in biofilm formation; therefore it could govern the transition between a state in which bacteria swim or swarm and a state in which bacteria assemble into multicellular communities. Acts with Hpr as a corepressor of epr expression. Also negatively regulates transcription of the lutABC operon, which is required for lactate utilization. Repressor activity is regulated by SinI. This Bacillus subtilis (strain 168) protein is HTH-type transcriptional regulator SinR (sinR).